The primary structure comprises 512 residues: Cytochrome P450 monooxygenase cheE (512 aa).

A helical membrane pass occupies residues 5-27; it reads YFAAESSWSPYVILVLALAAMVA. Asn53, Asn124, and Asn168 each carry an N-linked (GlcNAc...) asparagine glycan. Cys455 provides a ligand contact to heme. 2 N-linked (GlcNAc...) asparagine glycosylation sites follow: Asn499 and Asn508.

The protein belongs to the cytochrome P450 family. Heme serves as cofactor.

The protein resides in the membrane. Its pathway is secondary metabolite biosynthesis. Functionally, cytochrome P450 monooxygenase; part of the gene cluster that mediates the biosynthesis of chaetoglobosin A which has a unique inhibitory activity against actin polymerization in mammalian cells. Chaetoglobosin A and its intermediates are involved in the morphological differentiation of C.globosum. The first step of the pathway is the synthesis of prochaetoglobosin I via condensation of one acetyl-CoA, 8 malonyl-CoA, and a L-tryptophan molecule by the PKS-NRPS hybrid synthetase cheA, followed by reduction of backbone double bond to install desired geometry by the enoyl reductase cheB. Further multiple oxidation steps performed by the cytochrome P450 monooxygenases cheE and cheG, as well as by the FAD-linked oxidoreductase cheF, lead to the formation of chaetoglobosin A. Depending on the order of action of these reductases, distinct intermediates can be identified. Within the pathway, the cytochrome P450 monooxygenase cheE catalyzes a stereospecific epoxidation on prochaetoglobosin I, cytoglobosin D, and chaetoglobosin J intermediates. The FAD-linked oxidoreductase cheF performs dehydrogenation of the C-20 hydroxyl groups in the 20-dihyrochaetoglobosin A and cytoglobosin D intermediates. Finally, the cytochrome P450 monooxygenase cheG can catalyze the stereospecific dihydroxylation of prochaetoglobosin I and prochaetoglobosin IV at C-19 and C-20, respectively. The Diels-Alderase cheD may play a role in the post-PKS-NRPS biosynthetic steps catalyzing Diels-Alder cyclization. The chain is Cytochrome P450 monooxygenase cheE from Chaetomium globosum (strain ATCC 6205 / CBS 148.51 / DSM 1962 / NBRC 6347 / NRRL 1970) (Soil fungus).